An 84-amino-acid polypeptide reads, in one-letter code: UPF0248 protein PF1300 (84 aa).

Belongs to the UPF0248 family.

This is UPF0248 protein PF1300 from Pyrococcus furiosus (strain ATCC 43587 / DSM 3638 / JCM 8422 / Vc1).